The primary structure comprises 85 residues: Probable Sec-independent protein translocase protein TatE (85 aa).

The chain crosses the membrane as a helical span at residues 1–21 (MEGLSITKLLVVGILIVLLFG). The tract at residues 64-85 (KTVAETKAASDSQAAASVERKD) is disordered.

The protein belongs to the TatA/E family. TatE subfamily.

Its subcellular location is the cell inner membrane. In terms of biological role, part of the twin-arginine translocation (Tat) system that transports large folded proteins containing a characteristic twin-arginine motif in their signal peptide across membranes. TatE shares overlapping functions with TatA. This is Probable Sec-independent protein translocase protein TatE from Yersinia pestis.